Here is a 364-residue protein sequence, read N- to C-terminus: Dihydroorotate dehydrogenase (quinone) (364 aa).

Residues 61–65 (AGFDK) and Thr85 each bind FMN. Substrate is bound at residue Lys65. Substrate is bound at residue 110–114 (NRMGF). Residues Asn139 and Asn170 each contribute to the FMN site. Asn170 contributes to the substrate binding site. Residue Ser173 is the Nucleophile of the active site. Asn175 is a substrate binding site. Residues Lys214 and Ala242 each contribute to the FMN site. 243-244 (NT) serves as a coordination point for substrate. FMN is bound by residues Gly266, Gly295, and 316 to 317 (YS).

This sequence belongs to the dihydroorotate dehydrogenase family. Type 2 subfamily. In terms of assembly, monomer. FMN serves as cofactor.

The protein resides in the cell membrane. The catalysed reaction is (S)-dihydroorotate + a quinone = orotate + a quinol. It functions in the pathway pyrimidine metabolism; UMP biosynthesis via de novo pathway; orotate from (S)-dihydroorotate (quinone route): step 1/1. Its function is as follows. Catalyzes the conversion of dihydroorotate to orotate with quinone as electron acceptor. The protein is Dihydroorotate dehydrogenase (quinone) of Rhodopseudomonas palustris (strain ATCC BAA-98 / CGA009).